We begin with the raw amino-acid sequence, 403 residues long: Phosphoglycerate kinase (403 aa).

Substrate is bound by residues 21 to 23, Arg-36, 59 to 62, Arg-119, and Arg-159; these read DFN and HLGR. ATP contacts are provided by residues Lys-214, Gly-301, Glu-332, and 359-362; that span reads GGDS.

The protein belongs to the phosphoglycerate kinase family. As to quaternary structure, monomer.

The protein localises to the cytoplasm. It carries out the reaction (2R)-3-phosphoglycerate + ATP = (2R)-3-phospho-glyceroyl phosphate + ADP. The protein operates within carbohydrate degradation; glycolysis; pyruvate from D-glyceraldehyde 3-phosphate: step 2/5. The protein is Phosphoglycerate kinase of Lactobacillus gasseri (strain ATCC 33323 / DSM 20243 / BCRC 14619 / CIP 102991 / JCM 1131 / KCTC 3163 / NCIMB 11718 / NCTC 13722 / AM63).